The following is a 276-amino-acid chain: Ammonia monooxygenase alpha subunit (276 aa).

Helical transmembrane passes span 29–49 (VYFP…FMLL), 66–86 (PVVT…YLWV), 96–116 (LCVV…FYWW), 123–143 (FVTP…LYLT), and 150–170 (ALVG…PIFG). Positions 187, 191, and 204 each coordinate Cu(+). A helical membrane pass occupies residues 219-239 (VIAAFFSAFVSMLMFTVWWYL).

As to quaternary structure, the soluble ammonia monooxygenase is a nonamer composed of three alpha subunits (AmoA), three beta subunits (AmoB) and three gamma subunits (Cytochrome c1 PetC). The cofactor is Cu(+).

The protein localises to the cell membrane. The protein resides in the cytoplasm. It carries out the reaction AH2 + NH4(+) + O2 = hydroxylamine + A + H2O + H(+). With respect to regulation, in vitro, inhibited by acetylene. In fact, acetylene is oxidized to ketene which binds irreversibly to His-191 of ammonia monooxygenase alpha subunit (AmoA). Functionally, part of the ammonia monooxygenase complex, which catalyzes the oxidation of ammonia to hydroxylamine, the first reaction in the process of ammonia oxidation to nitrite. This is Ammonia monooxygenase alpha subunit from Nitrosomonas europaea (strain ATCC 19718 / CIP 103999 / KCTC 2705 / NBRC 14298).